The primary structure comprises 53 residues: Small, acid-soluble spore protein O (53 aa).

Residues 1–53 are disordered; it reads MVRKKANHSRPGMNAAKAQGKDAGLTSQFHAEIGQEPLNQAQRQNNKKRKKNQ.

Belongs to the SspO family.

The protein resides in the spore core. The protein is Small, acid-soluble spore protein O of Halalkalibacterium halodurans (strain ATCC BAA-125 / DSM 18197 / FERM 7344 / JCM 9153 / C-125) (Bacillus halodurans).